The primary structure comprises 430 residues: Nacrein-like protein P2 (430 aa).

Asparagine 27 carries N-linked (GlcNAc...) asparagine glycosylation. The Alpha-carbonic anhydrase domain occupies 33-429; sequence AGFSYDRSIC…KNKVTVYKSF (397 aa). Histidine 132, histidine 134, and histidine 157 together coordinate Zn(2+). Positions 201 to 312 are disordered; it reads DEPDDEECKR…GENGHKHGCR (112 aa). Over residues 207-219 the composition is skewed to basic and acidic residues; the sequence is ECKRILKGHHPDN. Residues 220 to 304 are compositionally biased toward low complexity; sequence NENGNGDNGN…NNGENGNNGE (85 aa). 27 repeat units span residues 225–227, 228–230, 231–233, 234–236, 237–239, 240–242, 243–245, 246–248, 249–251, 252–254, 255–257, 258–260, 261–263, 264–266, 267–269, 270–272, 273–275, 276–278, 279–281, 282–284, 285–287, 288–290, 291–293, 294–296, 297–299, 300–301, and 303–305. Residues 225 to 305 form a 27 X 3 AA approximate tandem repeats of G-X-N region; sequence GDNGNNGYNG…NGENGNNGEN (81 aa). Position 370–371 (370–371) interacts with substrate; the sequence is TT.

The protein belongs to the alpha-carbonic anhydrase family. In terms of assembly, homooligomer; disulfide-linked. May also be disulfide-linked to insoluble organic matrix. The cofactor is Zn(2+). Expressed in the mantle.

The protein resides in the secreted. It localises to the extracellular space. It is found in the extracellular matrix. It carries out the reaction hydrogencarbonate + H(+) = CO2 + H2O. Its function is as follows. Acts as a negative regulator for calcification in the shells of mollusks. May function both as a calcium concentrator and as a carbonic anhydrase required for production of carbonate ions, which are assembled to CaCO(3) at mineralization sites. Is important for shell formation in both the calcitic prismatic layer and the aragonitic nacreous layer. Shows inhibitory activity of crystal formation when present in free state but, when attached to the insoluble matrix, may regulate the form and size of aragonite crystal. The sequence is that of Nacrein-like protein P2 from Mizuhopecten yessoensis (Japanese scallop).